A 600-amino-acid polypeptide reads, in one-letter code: ATP-dependent lipid A-core flippase (600 aa).

Helical transmembrane passes span 26–46 (VGIF…QPML), 82–102 (LLIV…NYFL), 167–187 (VFLF…MLAI), and 266–286 (PMLQ…VLFL). The region spanning 30-321 (LLSILGFVIF…LSEVSSTIQK (292 aa)) is the ABC transmembrane type-1 domain. Residues 353 to 589 (LEVKNLSFFY…NGYYARLHAM (237 aa)) enclose the ABC transporter domain. 387–394 (GRSGSGKS) contributes to the ATP binding site.

Belongs to the ABC transporter superfamily. Lipid exporter (TC 3.A.1.106) family. Homodimer.

Its subcellular location is the cell inner membrane. It carries out the reaction ATP + H2O + lipid A-core oligosaccharideSide 1 = ADP + phosphate + lipid A-core oligosaccharideSide 2.. Its function is as follows. Involved in lipopolysaccharide (LPS) biosynthesis. Translocates lipid A-core from the inner to the outer leaflet of the inner membrane. Transmembrane domains (TMD) form a pore in the inner membrane and the ATP-binding domain (NBD) is responsible for energy generation. The protein is ATP-dependent lipid A-core flippase of Pseudomonas syringae pv. tomato (strain ATCC BAA-871 / DC3000).